We begin with the raw amino-acid sequence, 210 residues long: 3-hexulose-6-phosphate synthase (210 aa).

It belongs to the HPS/KGPDC family. HPS subfamily.

The catalysed reaction is D-ribulose 5-phosphate + formaldehyde = D-arabino-hex-3-ulose 6-phosphate. It functions in the pathway one-carbon metabolism; formaldehyde assimilation via RuMP pathway; D-fructose 6-phosphate from D-ribulose 5-phosphate and formaldehyde: step 1/2. Catalyzes the condensation of ribulose 5-phosphate with formaldehyde to form 3-hexulose 6-phosphate. This Staphylococcus aureus (strain NCTC 8325 / PS 47) protein is 3-hexulose-6-phosphate synthase.